Consider the following 418-residue polypeptide: MDDLLNSVSFSNASNPHNAWGSENISNSNSAIPSITNDVSFSMEASVWKENALNLDTFNLKDINEKLDYTFGVVKPPKRISLASKDYIGITATSETNFRQLIRLGYNEKSLGELKQGTISRLLKEHMTLWNQERSNVNRKSNVLFCWSTAYQKQKRKTASYTNSPVTPPINDKNILLPEQSPLSNFSTTKISSINVPSDILDFSNLSSNEIPKDYSSSTALLNNTVAVKQDHKLSANTFLSSPVKLIERESNSCSTISINKEDEVVPKSPLSLDRKKVDEVEEHSSIAKLDSEEKIRETKKKNSSTSLSPDPTSDNFEWGSWVSSQDTSKNSSNLASASVDDVSEESQVEPNTLIFQNFSSPSTSLSAPKDTPAVIQSINTSFLNNERAGRGNIKTVDQNQLINRIVDKLPDLSYLVD.

Basic and acidic residues predominate over residues 282–297 (EEHSSIAKLDSEEKIR). Positions 282–346 (EEHSSIAKLD…SASVDDVSEE (65 aa)) are disordered. Positions 304-316 (SSTSLSPDPTSDN) are enriched in low complexity. A compositionally biased stretch (polar residues) spans 322–337 (WVSSQDTSKNSSNLAS).

This is an uncharacterized protein from Schizosaccharomyces pombe (strain 972 / ATCC 24843) (Fission yeast).